The following is a 470-amino-acid chain: Sorting nexin-17 (470 aa).

Positions 1 to 109 (MHFSIPETES…SFLRRAQQET (109 aa)) constitute a PX domain. A 1,2-diacyl-sn-glycero-3-phospho-(1D-myo-inositol-3-phosphate) is bound by residues Arg36, Ser38, Lys62, and Arg75. The Ras-associating domain maps to 115–206 (EEVSLEVLLS…YKIVLRKSYW (92 aa)). The interval 115 to 432 (EEVSLEVLLS…DASRESMVKL (318 aa)) is FERM-like. A PTB-like F3 module region spans residues 270-432 (GYLRFDACVA…DASRESMVKL (163 aa)). 7 positions are modified to phosphoserine: Ser336, Ser407, Ser409, Ser415, Ser421, Ser437, and Ser440. Positions 400–426 (VGGTLRRSDSQQAVKSPPLLESPDASR) are disordered.

This sequence belongs to the sorting nexin family. Monomer. Interacts with APP (via cytoplasmic YXNPXY motif). Interacts with KIF1B. Interacts with the C-termini of P-selectin, PTC, LDLR, VLDLR, LRP1 and LRP8. Interacts with KRIT1 (via N-terminus). Interacts with HRAS. Interacts with ITGB1 and ITGB5 (via NPxY motif). Interacts with CCDC22 and CCDC93; the interaction associates SNX17 with the CCC complex. Interacts (via C-terminus) with VPS26C and VPS35L; the interactions are direct and associate SNX17 with the retriever complex.

It is found in the cytoplasm. Its subcellular location is the early endosome. The protein localises to the cytoplasmic vesicle membrane. In terms of biological role, critical regulator of endosomal recycling of numerous surface proteins, including integrins, signaling receptor and channels. Binds to NPxY sequences in the cytoplasmic tails of target cargos. Associates with retriever and CCC complexes to prevent lysosomal degradation and promote cell surface recycling of numerous cargos such as integrins ITGB1, ITGB5 and their associated alpha subunits. Also required for maintenance of normal cell surface levels of APP and LRP1. Interacts with membranes containing phosphatidylinositol 3-phosphate (PtdIns(3P)). The protein is Sorting nexin-17 (SNX17) of Bos taurus (Bovine).